The chain runs to 147 residues: MRLIKLHHLRPAPGSRRARIRVGRGEGSKGKTAGRGTKGTKARAPVRPGFAGGQIPLHMSIPKLKGFKNHKKVEYSVISIKRLCEAYPSGGVVTRDNVMSVIGKKRGFVKLLSDGEVTVKFDITVDKASAAAVEKITSAAGTVTQAR.

Residues 21–49 form a disordered region; the sequence is RVGRGEGSKGKTAGRGTKGTKARAPVRPG.

Belongs to the universal ribosomal protein uL15 family. As to quaternary structure, part of the 50S ribosomal subunit.

Binds to the 23S rRNA. This is Large ribosomal subunit protein uL15 from Tropheryma whipplei (strain TW08/27) (Whipple's bacillus).